The chain runs to 448 residues: Antilisterial bacteriocin subtilosin biosynthesis protein AlbA (448 aa).

The 215-residue stretch at 115 to 329 (FPMPLHATFE…EQHVIDEFKD (215 aa)) folds into the Radical SAM core domain. Cys129, Cys133, Cys136, Cys408, Cys414, and Cys417 together coordinate [4Fe-4S] cluster.

[4Fe-4S] cluster serves as cofactor.

Its subcellular location is the cytoplasm. Its function is as follows. Catalyzes the formation of 3 thioether bonds during production of the sactipeptide subtilosin from SboA. In vitro the thioether bonds cannot be made in the absence of the SboA propeptide, suggesting this is the first reaction in subtilosin maturation. In vitro, in the absence of a second substrate, cleaves S-adenosyl-L-methionine into Met and 5'-dA. The protein is Antilisterial bacteriocin subtilosin biosynthesis protein AlbA (albA) of Bacillus subtilis (strain 168).